A 442-amino-acid chain; its full sequence is UPF0489 protein C5orf22 homolog (442 aa).

The disordered stretch occupies residues 175-208 (SSAKKPKLALEDSRNTASTNCDSSSEGLEKDTAT). Residues 189 to 200 (NTASTNCDSSSE) are compositionally biased toward polar residues.

Belongs to the UPF0489 family.

The chain is UPF0489 protein C5orf22 homolog from Pongo abelii (Sumatran orangutan).